We begin with the raw amino-acid sequence, 97 residues long: MSRICELTGKGRQIGHNVSHANNKTKRTFLPNLQNVTLLSDALGKSVKLRVSTHGLRSVEHNGGLDNWLMKTGDDQLSANARKLKKEVAKKLAEKAA.

This sequence belongs to the bacterial ribosomal protein bL28 family.

This is Large ribosomal subunit protein bL28 from Sphingopyxis alaskensis (strain DSM 13593 / LMG 18877 / RB2256) (Sphingomonas alaskensis).